The primary structure comprises 97 residues: HssA/B-like protein 44 (97 aa).

Disordered stretches follow at residues 1-22 and 62-97; these read MTLF…SSIA and ASTS…CGCN. A compositionally biased stretch (basic residues) spans 72–84; that stretch reads RPGRGHGGPHGHG. Gly residues predominate over residues 85-97; it reads RGGSGSGSSCGCN.

The protein belongs to the hssA/B family.

The sequence is that of HssA/B-like protein 44 (hssl44) from Dictyostelium discoideum (Social amoeba).